Reading from the N-terminus, the 143-residue chain is Myocilin opposite strand protein (143 aa).

A disordered region spans residues 65–111 (MATRDETITKKSGEGEEMLPSMGMDHESPSKAHLMVPPAPPPSPADA). A compositionally biased stretch (basic and acidic residues) spans 66-78 (ATRDETITKKSGE).

In Mus musculus (Mouse), this protein is Myocilin opposite strand protein.